A 202-amino-acid chain; its full sequence is Dephospho-CoA kinase (202 aa).

Residues 4 to 201 form the DPCK domain; it reads VIGLTGGIAS…QKYLAMSKQN (198 aa). 12–17 contacts ATP; the sequence is ASGKTT.

It belongs to the CoaE family.

The protein resides in the cytoplasm. It carries out the reaction 3'-dephospho-CoA + ATP = ADP + CoA + H(+). Its pathway is cofactor biosynthesis; coenzyme A biosynthesis; CoA from (R)-pantothenate: step 5/5. Functionally, catalyzes the phosphorylation of the 3'-hydroxyl group of dephosphocoenzyme A to form coenzyme A. The protein is Dephospho-CoA kinase of Vibrio vulnificus (strain YJ016).